The chain runs to 111 residues: Prefoldin subunit 2 (111 aa).

2 coiled-coil regions span residues methionine 1–histidine 36 and leucine 72–glutamine 92.

It belongs to the prefoldin subunit beta family. Heterohexamer of two PFD-alpha type and four PFD-beta type subunits.

The protein resides in the cytoplasm. Binds specifically to cytosolic chaperonin (c-CPN) and transfers target proteins to it. Binds to nascent polypeptide chain and promotes folding in an environment in which there are many competing pathways for nonnative proteins. The sequence is that of Prefoldin subunit 2 (GIM4) from Saccharomyces cerevisiae (strain ATCC 204508 / S288c) (Baker's yeast).